The following is a 369-amino-acid chain: Caffeine synthase 1 (369 aa).

Y24 is a binding site for S-adenosyl-L-homocysteine. T31 is a caffeine binding site. 6 residues coordinate S-adenosyl-L-homocysteine: C66, N71, D103, L104, S138, and F139. Residues Y156, H159, and W160 each contribute to the caffeine site. N177 contacts Mg(2+). Residue R225 coordinates caffeine. Positions 263, 265, and 266 each coordinate Mg(2+). F321 provides a ligand contact to caffeine.

Belongs to the methyltransferase superfamily. Type-7 methyltransferase family. Requires Mg(2+) as cofactor.

It carries out the reaction theobromine + S-adenosyl-L-methionine = caffeine + S-adenosyl-L-homocysteine + H(+). It catalyses the reaction 7-methylxanthine + S-adenosyl-L-methionine = theobromine + S-adenosyl-L-homocysteine + H(+). It functions in the pathway alkaloid biosynthesis. Functionally, involved in the biosynthesis of caffeine. Catalyzes the conversion of 7-methylxanthine (7mX) to theobromine and of theobromine to caffeine. This Camellia crassicolumna (Evergreen tea) protein is Caffeine synthase 1.